Consider the following 333-residue polypeptide: Torsin-1A (333 aa).

The signal sequence occupies residues 1 to 20 (MKLGRAALALLLLAPCVVRA). The interval 92-252 (KPKKPLTLSL…VSVFNNKNSG (161 aa)) is interaction with SNAPIN. Position 103–110 (103–110 (GWTGTGKN)) interacts with ATP. N-linked (GlcNAc...) asparagine glycans are attached at residues Asn144 and Asn159. The interval 252–333 (GFWHSSLIDR…FTKLDYYLDD (82 aa)) is interaction with KLC1. The interval 313–333 (KVFSDKGCKTVFTKLDYYLDD) is interaction with SYNE3.

Belongs to the ClpA/ClpB family. Torsin subfamily. Homohexamer. Interacts with TOR1B; the interaction may be specific of neural tissues. Interacts (ATP-bound) with TOR1AIP1 and TOR1AIP2; the interactions induce ATPase activity. Interacts with KLHL14; preferentially when ATP-free. Interacts with KLC1 (via TPR repeats); the interaction associates TOR1A with the kinesin oligomeric complex. Interacts with COPS4; the interaction associates TOR1A with the CSN complex. Interacts with SNAPIN; the interaction is direct and associates SNAPIN with the CSN complex. Interacts with STON2. Interacts (ATP-bound) with SYNE3 (via KASH domain); the interaction is required for SYNE3 nuclear envelope localization. Interacts with VIM; the interaction associates TOR1A with the cytoskeleton. Interacts with PLEC. Interacts (ATP-bound) with SLC6A3; regulates SLC6A3 transport to the plasma membrane. Post-translationally, N-glycosylated. Widely expressed (at protein level).

It is found in the endoplasmic reticulum lumen. The protein localises to the nucleus membrane. It localises to the cell projection. Its subcellular location is the growth cone. The protein resides in the cytoplasmic vesicle membrane. It is found in the synapse. The protein localises to the synaptosome. It localises to the cytoplasm. Its subcellular location is the cytoskeleton. The protein resides in the cytoplasmic vesicle. It is found in the secretory vesicle. The protein localises to the synaptic vesicle. It carries out the reaction ATP + H2O = ADP + phosphate + H(+). In terms of biological role, protein with chaperone functions important for the control of protein folding, processing, stability and localization as well as for the reduction of misfolded protein aggregates. Involved in the regulation of synaptic vesicle recycling, controls STON2 protein stability in collaboration with the COP9 signalosome complex (CSN). In the nucleus, may link the cytoskeleton with the nuclear envelope, this mechanism seems to be crucial for the control of nuclear polarity, cell movement and, specifically in neurons, nuclear envelope integrity. Participates in the cellular trafficking and may regulate the subcellular location of multipass membrane proteins such as the dopamine transporter SLC6A3, leading to the modulation of dopamine neurotransmission. In the endoplasmic reticulum, plays a role in the quality control of protein folding by increasing clearance of misfolded proteins such as SGCE variants or holding them in an intermediate state for proper refolding. May have a redundant function with TOR1B in non-neural tissues. In Mus musculus (Mouse), this protein is Torsin-1A (Tor1a).